The chain runs to 531 residues: Cytosolic Fe-S cluster assembly factor NAR1 (531 aa).

[4Fe-4S] cluster-binding residues include cysteine 20, cysteine 72, cysteine 75, cysteine 78, cysteine 184, and cysteine 239. The interval threonine 395–valine 426 is disordered. Positions 442 and 446 each coordinate [4Fe-4S] cluster.

It belongs to the NARF family.

Its function is as follows. Component of the cytosolic Fe/S protein assembly machinery. Required for maturation of extramitochondrial Fe/S proteins. May play a role in the transfer of pre-assembled Fe/S clusters to target apoproteins. The sequence is that of Cytosolic Fe-S cluster assembly factor NAR1 (NAR1) from Meyerozyma guilliermondii (strain ATCC 6260 / CBS 566 / DSM 6381 / JCM 1539 / NBRC 10279 / NRRL Y-324) (Yeast).